Here is a 205-residue protein sequence, read N- to C-terminus: Probable GTP-binding protein EngB (205 aa).

Residues 8-195 (RDAEVVLIGR…NEAVRHHLHE (188 aa)) enclose the EngB-type G domain. GTP contacts are provided by residues 16 to 23 (GRSNVGKS), 41 to 45 (GVTRS), 60 to 63 (DLPG), 140 to 143 (NKMD), and 175 to 177 (ISA). Mg(2+)-binding residues include serine 23 and threonine 43.

Belongs to the TRAFAC class TrmE-Era-EngA-EngB-Septin-like GTPase superfamily. EngB GTPase family. Mg(2+) is required as a cofactor.

Necessary for normal cell division and for the maintenance of normal septation. The polypeptide is Probable GTP-binding protein EngB (Haloarcula marismortui (strain ATCC 43049 / DSM 3752 / JCM 8966 / VKM B-1809) (Halobacterium marismortui)).